Here is an 85-residue protein sequence, read N- to C-terminus: Large ribosomal subunit protein bL27 (85 aa).

A disordered region spans residues 1–21; the sequence is MAHKKGGGSTKNGRDSNPKYL.

It belongs to the bacterial ribosomal protein bL27 family.

This Chlorobium chlorochromatii (strain CaD3) protein is Large ribosomal subunit protein bL27.